We begin with the raw amino-acid sequence, 219 residues long: OVARIAN TUMOR DOMAIN-containing deubiquitinating enzyme 12 (219 aa).

The 125-residue stretch at 79-203 (LCELKVSGDG…EVHYNSLYDI (125 aa)) folds into the OTU domain. The active site involves Asp-87. Catalysis depends on Cys-90, which acts as the Nucleophile. Residue His-196 is part of the active site.

It belongs to the peptidase C85 family.

It carries out the reaction Thiol-dependent hydrolysis of ester, thioester, amide, peptide and isopeptide bonds formed by the C-terminal Gly of ubiquitin (a 76-residue protein attached to proteins as an intracellular targeting signal).. Functionally, hydrolase that can remove conjugated ubiquitin from proteins in vitro and may therefore play an important regulatory role at the level of protein turnover by preventing degradation. Inactive cysteine protease. In Arabidopsis thaliana (Mouse-ear cress), this protein is OVARIAN TUMOR DOMAIN-containing deubiquitinating enzyme 12.